Here is a 630-residue protein sequence, read N- to C-terminus: Chaperone protein HtpG (630 aa).

An a; substrate-binding region spans residues Met1–Arg341. The b stretch occupies residues Glu342–Arg558. Positions Met559–Val630 are c.

This sequence belongs to the heat shock protein 90 family. As to quaternary structure, homodimer.

Its subcellular location is the cytoplasm. In terms of biological role, molecular chaperone. Has ATPase activity. The sequence is that of Chaperone protein HtpG from Bordetella avium (strain 197N).